Here is a 176-residue protein sequence, read N- to C-terminus: Ribosome maturation factor RimM (176 aa).

A PRC barrel domain is found at 97–176 (EDEFYWRDLI…QITVDWDPDF (80 aa)).

The protein belongs to the RimM family. Binds ribosomal protein uS19.

Its subcellular location is the cytoplasm. In terms of biological role, an accessory protein needed during the final step in the assembly of 30S ribosomal subunit, possibly for assembly of the head region. Essential for efficient processing of 16S rRNA. May be needed both before and after RbfA during the maturation of 16S rRNA. It has affinity for free ribosomal 30S subunits but not for 70S ribosomes. The sequence is that of Ribosome maturation factor RimM from Shewanella sediminis (strain HAW-EB3).